The sequence spans 131 residues: MLLLNQTLATTEKQTALQAAEKFVDELCISYSAKKGRGYARKRQKNLLATLQAYKPQNPKDAPVNCDKCGKPGNVKNDCPGSMRKPARPCPICGGDHWRVDCPQRCRSLGPKPVSQVSNRIDGPQGSCPWL.

The segment at 64 to 81 adopts a CCHC-type; degenerate zinc-finger fold; it reads VNCDKCGKPGNVKNDCPG.

This is an uncharacterized protein from Homo sapiens (Human).